Here is a 119-residue protein sequence, read N- to C-terminus: Secreted RxLR effector protein RXLR-C04 (119 aa).

Positions 1 to 22 (MRLSYIFVVVATIITNCDIASA) are cleaved as a signal peptide. A RxLR-dEER motif is present at residues 40-77 (RILRQTNDSDDLEPIRHAMLDMELLEKIAKDPKYAEEV). Asparagine 46 carries N-linked (GlcNAc...) asparagine glycosylation.

This sequence belongs to the RxLR effector family.

The protein resides in the secreted. The protein localises to the host cytoplasm. It is found in the host nucleus. Its function is as follows. Secreted effector that suppresses pattern-triggered immunity (PTI) in plant host. The chain is Secreted RxLR effector protein RXLR-C04 from Plasmopara halstedii (Downy mildew of sunflower).